The following is a 284-amino-acid chain: RNase adapter protein RapZ (284 aa).

Position 8–15 (8–15 (GRSGSGKS)) interacts with ATP. 56–59 (DVRN) lines the GTP pocket. The tract at residues 266-284 (RSRGKNVQSRHRTLEKRKT) is RNA-binding.

Belongs to the RapZ-like family. RapZ subfamily. Homotrimer.

Modulates the synthesis of GlmS, by affecting the processing and stability of the regulatory small RNA GlmZ. When glucosamine-6-phosphate (GlcN6P) concentrations are high in the cell, RapZ binds GlmZ and targets it to cleavage by RNase E. Consequently, GlmZ is inactivated and unable to activate GlmS synthesis. Under low GlcN6P concentrations, RapZ is sequestered and inactivated by an other regulatory small RNA, GlmY, preventing GlmZ degradation and leading to synthesis of GlmS. This is RNase adapter protein RapZ from Salmonella arizonae (strain ATCC BAA-731 / CDC346-86 / RSK2980).